The sequence spans 225 residues: Two-component response regulator PhoP (225 aa).

The Response regulatory domain occupies 2–116; that stretch reads KLLVVEDEAL…ELEARLNALL (115 aa). Position 51 is a 4-aspartylphosphate (Asp-51). Positions 124 to 222 form a DNA-binding region, ompR/PhoB-type; that stretch reads QSTIEAGPLV…VRGQGYLFTE (99 aa).

Member of the two-component regulatory system PhoP/PhoQ that plays a role in the regulation of resistance towards polymyxin B and cationic antimicrobial peptides in response to limiting concentrations of Mg(2+). Functions as a transcriptional activator by direct binding to a cis-acting sequence upstream of the target gene promoters including oprH and pmrH promoters. The protein is Two-component response regulator PhoP (phoP) of Pseudomonas aeruginosa (strain ATCC 15692 / DSM 22644 / CIP 104116 / JCM 14847 / LMG 12228 / 1C / PRS 101 / PAO1).